The sequence spans 345 residues: D-fructose 1,6-bisphosphatase class 2/sedoheptulose 1,7-bisphosphatase (345 aa).

Mn(2+) contacts are provided by D33, E57, D97, and E100. Substrate-binding positions include 100–102 (EGT), Y131, 176–178 (RPR), and 198–200 (DGD). E225 is a binding site for Mn(2+).

It belongs to the FBPase class 2 family. As to quaternary structure, homotetramer. It depends on Mn(2+) as a cofactor.

The enzyme catalyses beta-D-fructose 1,6-bisphosphate + H2O = beta-D-fructose 6-phosphate + phosphate. The catalysed reaction is D-sedoheptulose 1,7-bisphosphate + H2O = D-sedoheptulose 7-phosphate + phosphate. The protein operates within carbohydrate biosynthesis; Calvin cycle. Its function is as follows. Catalyzes the hydrolysis of fructose 1,6-bisphosphate (Fru 1,6-P2) and sedoheptulose 1,7-bisphosphate (Sed 1,7-P2) to fructose 6-phosphate and sedoheptulose 7-phosphate, respectively. The protein is D-fructose 1,6-bisphosphatase class 2/sedoheptulose 1,7-bisphosphatase of Synechocystis sp. (strain ATCC 27184 / PCC 6803 / Kazusa).